A 249-amino-acid polypeptide reads, in one-letter code: Triosephosphate isomerase (249 aa).

Residue 9–11 (NWK) coordinates substrate. H91 acts as the Electrophile in catalysis. The active-site Proton acceptor is E163. Substrate-binding positions include G169, S209, and 230 to 231 (GG).

It belongs to the triosephosphate isomerase family. Homodimer.

Its subcellular location is the cytoplasm. The catalysed reaction is D-glyceraldehyde 3-phosphate = dihydroxyacetone phosphate. The protein operates within carbohydrate biosynthesis; gluconeogenesis. It functions in the pathway carbohydrate degradation; glycolysis; D-glyceraldehyde 3-phosphate from glycerone phosphate: step 1/1. Functionally, involved in the gluconeogenesis. Catalyzes stereospecifically the conversion of dihydroxyacetone phosphate (DHAP) to D-glyceraldehyde-3-phosphate (G3P). This is Triosephosphate isomerase from Halorhodospira halophila (strain DSM 244 / SL1) (Ectothiorhodospira halophila (strain DSM 244 / SL1)).